The primary structure comprises 561 residues: DNA ligase B (561 aa).

Catalysis depends on Lys-125, which acts as the N6-AMP-lysine intermediate.

It belongs to the NAD-dependent DNA ligase family. LigB subfamily.

The enzyme catalyses NAD(+) + (deoxyribonucleotide)n-3'-hydroxyl + 5'-phospho-(deoxyribonucleotide)m = (deoxyribonucleotide)n+m + AMP + beta-nicotinamide D-nucleotide.. Catalyzes the formation of phosphodiester linkages between 5'-phosphoryl and 3'-hydroxyl groups in double-stranded DNA using NAD as a coenzyme and as the energy source for the reaction. This is DNA ligase B from Salmonella paratyphi A (strain AKU_12601).